Here is a 328-residue protein sequence, read N- to C-terminus: DNA-directed RNA polymerase subunit alpha (328 aa).

Positions 1 to 234 (MQGSVTEFLK…EQLDAFVDLR (234 aa)) are alpha N-terminal domain (alpha-NTD). Residues 248–328 (FDPILLRPVD…NWPPASIAED (81 aa)) form an alpha C-terminal domain (alpha-CTD) region.

Belongs to the RNA polymerase alpha chain family. As to quaternary structure, homodimer. The RNAP catalytic core consists of 2 alpha, 1 beta, 1 beta' and 1 omega subunit. When a sigma factor is associated with the core the holoenzyme is formed, which can initiate transcription.

It carries out the reaction RNA(n) + a ribonucleoside 5'-triphosphate = RNA(n+1) + diphosphate. Its function is as follows. DNA-dependent RNA polymerase catalyzes the transcription of DNA into RNA using the four ribonucleoside triphosphates as substrates. This is DNA-directed RNA polymerase subunit alpha from Haemophilus influenzae (strain PittEE).